The primary structure comprises 88 residues: Small ribosomal subunit protein bS20 (88 aa).

The interval 1-28 (MANIKSQIKRNRQNEKRRLRNKSVKSSL) is disordered. Over residues 7 to 23 (QIKRNRQNEKRRLRNKS) the composition is skewed to basic residues.

The protein belongs to the bacterial ribosomal protein bS20 family.

Binds directly to 16S ribosomal RNA. The sequence is that of Small ribosomal subunit protein bS20 from Salinispora tropica (strain ATCC BAA-916 / DSM 44818 / JCM 13857 / NBRC 105044 / CNB-440).